The sequence spans 387 residues: 3-ketoacyl-CoA thiolase (387 aa).

The active-site Acyl-thioester intermediate is the cysteine 91. Residues histidine 343 and cysteine 373 each act as proton acceptor in the active site.

The protein belongs to the thiolase-like superfamily. Thiolase family. Heterotetramer of two alpha chains (FadB) and two beta chains (FadA).

It localises to the cytoplasm. The catalysed reaction is an acyl-CoA + acetyl-CoA = a 3-oxoacyl-CoA + CoA. The protein operates within lipid metabolism; fatty acid beta-oxidation. Catalyzes the final step of fatty acid oxidation in which acetyl-CoA is released and the CoA ester of a fatty acid two carbons shorter is formed. This is 3-ketoacyl-CoA thiolase from Shewanella oneidensis (strain ATCC 700550 / JCM 31522 / CIP 106686 / LMG 19005 / NCIMB 14063 / MR-1).